The sequence spans 670 residues: Oligopeptidase PepF (670 aa).

His-456 is a Zn(2+) binding site. The active site involves Glu-457. Zn(2+)-binding residues include His-460 and His-463.

This sequence belongs to the peptidase M3B family. The cofactor is Zn(2+).

The protein resides in the cytoplasm. Functionally, overexpression results in inhibition of sporulation initiation. This sporulation deficiency could be the result of hydrolysis by PepF of the PhrA peptide, a phosphatase regulator. Thus, overexpression of PepF appears to act at the level of the phosphorelay, most likely through modulation of the negative role played by phosphatases. Overexpression of PepF also affects the activity of the competence and sporulation stimulating factor PhrC. This is Oligopeptidase PepF from Bacillus subtilis (strain 168).